The chain runs to 303 residues: Probable cell division protein WhiA (303 aa).

The segment at residues 272-303 (SIQQLADSLSTPLTKSGVNHRLRKINKIADEL) is a DNA-binding region (H-T-H motif).

This sequence belongs to the WhiA family.

Involved in cell division and chromosome segregation. This is Probable cell division protein WhiA from Streptococcus pneumoniae (strain ATCC 700669 / Spain 23F-1).